Consider the following 837-residue polypeptide: Striatin-interacting protein 1 (837 aa).

Residue Met1 is modified to N-acetylmethionine. Disordered stretches follow at residues 1 to 66 (MEPA…SESP) and 333 to 423 (AASP…KGLP). Residues 18–35 (PQPPPPPPPATAQPPPGA) are compositionally biased toward pro residues. Over residues 47–60 (KAREFNRNQRKDSE) the composition is skewed to basic and acidic residues. A phosphoserine mark is found at Ser59, Ser335, and Ser339. Residues 356–377 (KALIKQDNLDAFNERDPYKADD) are compositionally biased toward basic and acidic residues. The span at 378 to 391 (SREEEEENDDDNSL) shows a compositional bias: acidic residues. Ser788 bears the Phosphoserine mark. The interval 796–837 (DNCLQSVLGQRVDLPEDFQMNYDLWLEREVFSKPISWEELLQ) is required for STRIPAK core complex formation.

Belongs to the STRIP family. In terms of assembly, part of the core of STRIPAK complexes composed of PP2A catalytic and scaffolding subunits, the striatins (PP2A regulatory subunits), the striatin-associated proteins MOB4, STRIP1 and STRIP2, PDCD10 and members of the STE20 kinases, such as STK24 and STK26. The STRIPAK complex can be extended by adapter proteins such as SLMAP:SIKE1, CTTNBP2 or CTTNBP2NL. Interacts with CDC42BPB. Interacts with CTTNBP2NL.

The protein localises to the cytoplasm. In terms of biological role, plays a role in the regulation of cell morphology and cytoskeletal organization. Required in the cortical actin filament dynamics and cell shape. Part of the striatin-interacting phosphatase and kinase (STRIPAK) complexes. STRIPAK complexes have critical roles in protein (de)phosphorylation and are regulators of multiple signaling pathways including Hippo, MAPK, nuclear receptor and cytoskeleton remodeling. Different types of STRIPAK complexes are involved in a variety of biological processes such as cell growth, differentiation, apoptosis, metabolism and immune regulation. This chain is Striatin-interacting protein 1 (STRIP1), found in Macaca fascicularis (Crab-eating macaque).